Consider the following 206-residue polypeptide: Transmembrane emp24 domain-containing protein bai (206 aa).

The N-terminal stretch at 1–20 (MLKVLYVIFTIFGYIWPIYS) is a signal peptide. Residues 21-172 (VMFHLTPNTQ…RDTNEKTNSR (152 aa)) lie on the Lumenal side of the membrane. The region spanning 30-140 (QKCLKEDIQA…LKPLEVDLKR (111 aa)) is the GOLD domain. A helical transmembrane segment spans residues 173–193 (VLFFSIFSMCCLLGLATWQVL). Residues 194–206 (YLRRYFKAKKLIE) are Cytoplasmic-facing.

Belongs to the EMP24/GP25L family.

The protein localises to the membrane. Eca and bai are essential, though not redundant, for dorsoventral patterning of the embryo. Specifically required during early embryogenesis for the activity of maternal tkv, while the zygotic tkv is not affected. This chain is Transmembrane emp24 domain-containing protein bai, found in Drosophila virilis (Fruit fly).